The chain runs to 296 residues: Large ribosomal subunit protein uL15m (296 aa).

Residues 1 to 20 (MSLIKKPGGKTIEVVKNLPR) constitute a mitochondrion transit peptide. A disordered region spans residues 25-59 (NLRPNPGAKTLEKRRGRGMHGGNRSGWGHKGERQR).

Belongs to the universal ribosomal protein uL15 family. Component of the mitochondrial ribosome large subunit (39S) which comprises a 16S rRNA and about 50 distinct proteins.

It localises to the mitochondrion. This chain is Large ribosomal subunit protein uL15m (mrpl15), found in Danio rerio (Zebrafish).